The chain runs to 2489 residues: Protein YPR117W (2489 aa).

2 helical membrane-spanning segments follow: residues Phe-19–Met-39 and Val-128–Thr-148. 15 N-linked (GlcNAc...) asparagine glycosylation sites follow: Asn-191, Asn-210, Asn-311, Asn-452, Asn-468, Asn-605, Asn-638, Asn-663, Asn-698, Asn-789, Asn-835, Asn-981, Asn-1255, Asn-1404, and Asn-1476. Positions Leu-1610–Ser-1676 form a coiled coil. Residues Pro-1685 to Leu-1704 are disordered. Residues Asp-1690 to Leu-1704 are compositionally biased toward low complexity. Asn-1978 and Asn-2189 each carry an N-linked (GlcNAc...) asparagine glycan. Phosphoserine is present on residues Ser-2254 and Ser-2278. N-linked (GlcNAc...) asparagine glycosylation is present at Asn-2279. Positions Ser-2451–Asp-2471 are enriched in polar residues. The segment at Ser-2451–Lys-2489 is disordered.

The protein localises to the cell membrane. It localises to the endoplasmic reticulum membrane. Its subcellular location is the mitochondrion membrane. Functionally, tube-forming lipid transport protein which may bind to phosphatidylinositols and may affect phosphatidylinositol-4,5-bisphosphate (PtdIns-4,5-P2) distribution. This Saccharomyces cerevisiae (strain ATCC 204508 / S288c) (Baker's yeast) protein is Protein YPR117W.